The primary structure comprises 274 residues: Urease accessory protein UreD (274 aa).

Belongs to the UreD family. As to quaternary structure, ureD, UreF and UreG form a complex that acts as a GTP-hydrolysis-dependent molecular chaperone, activating the urease apoprotein by helping to assemble the nickel containing metallocenter of UreC. The UreE protein probably delivers the nickel.

It localises to the cytoplasm. Required for maturation of urease via the functional incorporation of the urease nickel metallocenter. This is Urease accessory protein UreD from Lachnoclostridium phytofermentans (strain ATCC 700394 / DSM 18823 / ISDg) (Clostridium phytofermentans).